The primary structure comprises 210 residues: Glutathione S-transferase 3 (210 aa).

The 80-residue stretch at 1-80 folds into the GST N-terminal domain; that stretch reads MDFYYLPLSA…YLVEKYGKQN (80 aa). Glutathione is bound by residues S9, 50–52, and 64–66; these read HTI and ESR. One can recognise a GST C-terminal domain in the interval 87–208; that stretch reads CPKKRALINQ…AGCLEMKKYF (122 aa).

Belongs to the GST superfamily. Theta family. In terms of assembly, homodimer.

The enzyme catalyses RX + glutathione = an S-substituted glutathione + a halide anion + H(+). Conjugation of reduced glutathione to a wide number of exogenous and endogenous hydrophobic electrophiles. This is Glutathione S-transferase 3 (Gst3) from Musca domestica (House fly).